The chain runs to 105 residues: Iron-sulfur cluster assembly protein CyaY (105 aa).

Belongs to the frataxin family.

In terms of biological role, involved in iron-sulfur (Fe-S) cluster assembly. May act as a regulator of Fe-S biogenesis. This is Iron-sulfur cluster assembly protein CyaY from Paraburkholderia phytofirmans (strain DSM 17436 / LMG 22146 / PsJN) (Burkholderia phytofirmans).